Reading from the N-terminus, the 85-residue chain is Large ribosomal subunit protein bL27 (85 aa).

Residues 1-23 form a disordered region; the sequence is MAHKKAGGSSRNGRDSESKRLGV.

This sequence belongs to the bacterial ribosomal protein bL27 family.

This Nitrosococcus oceani (strain ATCC 19707 / BCRC 17464 / JCM 30415 / NCIMB 11848 / C-107) protein is Large ribosomal subunit protein bL27.